The primary structure comprises 309 residues: NAD kinase (309 aa).

The Proton acceptor role is filled by D89. Residues 89–90, 163–164, H174, R191, D193, and 204–209 contribute to the NAD(+) site; these read DG, NE, and TAYALS.

It belongs to the NAD kinase family. Requires a divalent metal cation as cofactor.

The protein localises to the cytoplasm. It catalyses the reaction NAD(+) + ATP = ADP + NADP(+) + H(+). In terms of biological role, involved in the regulation of the intracellular balance of NAD and NADP, and is a key enzyme in the biosynthesis of NADP. Catalyzes specifically the phosphorylation on 2'-hydroxyl of the adenosine moiety of NAD to yield NADP. The protein is NAD kinase of Shewanella baltica (strain OS185).